The chain runs to 745 residues: Centromere protein I (745 aa).

Over residues 1-27 the composition is skewed to polar residues; sequence MATPRLTRNSQQQNRISQGSNSRQTTL. The disordered stretch occupies residues 1-58; that stretch reads MATPRLTRNSQQQNRISQGSNSRQTTLLDWKVKDKAGNSKSVLEESSSLEDSNHADDQ. A compositionally biased stretch (low complexity) spans 39-50; that stretch reads SKSVLEESSSLE.

The protein belongs to the CENP-I/CTF3 family. In terms of assembly, component of the CENPA-CAD complex, composed of CENPI, CENPK, CENPL, CENPO, CENPP, CENPQ, CENPR and CENPS. The CENPA-CAD complex interacts with the CENPA-NAC complex, at least composed of CENPA, CENPC, CENPH, CENPM, CENPN, CENPT and CENPU. Interacts with SENP6. Post-translationally, sumoylated. Sumoylated form can be polyubiquitinated by RNF4, leading to its degradation. Desumoylation by SENP6 prevents its degradation. As to expression, highly expressed in testis, ovary and spleen. A much lower mRNA level is found in brain and lung, and no expression is detected in liver, kidney, heart, muscle, pituitary gland, prostate, epididymis and seminal vesicle.

The protein resides in the nucleus. The protein localises to the chromosome. It localises to the centromere. Functionally, component of the CENPA-CAD (nucleosome distal) complex, a complex recruited to centromeres which is involved in assembly of kinetochore proteins, mitotic progression and chromosome segregation. May be involved in incorporation of newly synthesized CENPA into centromeres via its interaction with the CENPA-NAC complex. Required for the localization of CENPF, MAD1L1 and MAD2 (MAD2L1 or MAD2L2) to kinetochores. Involved in the response of gonadal tissues to follicle-stimulating hormone. This Rattus norvegicus (Rat) protein is Centromere protein I (Cenpi).